Here is a 366-residue protein sequence, read N- to C-terminus: 2-aminoethylphosphonate--pyruvate transaminase (366 aa).

K194 carries the post-translational modification N6-(pyridoxal phosphate)lysine.

Belongs to the class-V pyridoxal-phosphate-dependent aminotransferase family. PhnW subfamily. Homodimer. Pyridoxal 5'-phosphate serves as cofactor.

The enzyme catalyses (2-aminoethyl)phosphonate + pyruvate = phosphonoacetaldehyde + L-alanine. Functionally, involved in phosphonate degradation. This Lactiplantibacillus plantarum (strain ATCC BAA-793 / NCIMB 8826 / WCFS1) (Lactobacillus plantarum) protein is 2-aminoethylphosphonate--pyruvate transaminase.